The chain runs to 299 residues: ATP phosphoribosyltransferase (299 aa).

This sequence belongs to the ATP phosphoribosyltransferase family. Long subfamily. Equilibrium between an active dimeric form, an inactive hexameric form and higher aggregates. Interconversion between the various forms is largely reversible and is influenced by the natural substrates and inhibitors of the enzyme. Mg(2+) is required as a cofactor.

The protein localises to the cytoplasm. It catalyses the reaction 1-(5-phospho-beta-D-ribosyl)-ATP + diphosphate = 5-phospho-alpha-D-ribose 1-diphosphate + ATP. Its pathway is amino-acid biosynthesis; L-histidine biosynthesis; L-histidine from 5-phospho-alpha-D-ribose 1-diphosphate: step 1/9. With respect to regulation, feedback inhibited by histidine. Catalyzes the condensation of ATP and 5-phosphoribose 1-diphosphate to form N'-(5'-phosphoribosyl)-ATP (PR-ATP). Has a crucial role in the pathway because the rate of histidine biosynthesis seems to be controlled primarily by regulation of HisG enzymatic activity. The polypeptide is ATP phosphoribosyltransferase (Buchnera aphidicola subsp. Melaphis rhois).